The following is a 374-amino-acid chain: Chaperone protein DnaJ (374 aa).

The J domain occupies 5–70; the sequence is DYYEVLGVSK…QKRAAYDQYG (66 aa). The CR-type zinc finger occupies 132–210; sequence GTTVKIRVPT…CHGHGRVEET (79 aa). Zn(2+) contacts are provided by cysteine 145, cysteine 148, cysteine 162, cysteine 165, cysteine 184, cysteine 187, cysteine 198, and cysteine 201. CXXCXGXG motif repeat units follow at residues 145–152, 162–169, 184–191, and 198–205; these read CKPCGGSG, CTTCGGHG, CPNCRGQG, and CKECHGHG.

The protein belongs to the DnaJ family. In terms of assembly, homodimer. Requires Zn(2+) as cofactor.

It localises to the cytoplasm. Participates actively in the response to hyperosmotic and heat shock by preventing the aggregation of stress-denatured proteins and by disaggregating proteins, also in an autonomous, DnaK-independent fashion. Unfolded proteins bind initially to DnaJ; upon interaction with the DnaJ-bound protein, DnaK hydrolyzes its bound ATP, resulting in the formation of a stable complex. GrpE releases ADP from DnaK; ATP binding to DnaK triggers the release of the substrate protein, thus completing the reaction cycle. Several rounds of ATP-dependent interactions between DnaJ, DnaK and GrpE are required for fully efficient folding. Also involved, together with DnaK and GrpE, in the DNA replication of plasmids through activation of initiation proteins. The sequence is that of Chaperone protein DnaJ from Saccharophagus degradans (strain 2-40 / ATCC 43961 / DSM 17024).